We begin with the raw amino-acid sequence, 173 residues long: uncharacterized protein (173 aa).

The segment covering 1-11 (MLCAKNKKDPK) has biased composition (basic and acidic residues). Residues 1 to 173 (MLCAKNKKDP…EKMEKSEKAY (173 aa)) form a disordered region. The span at 17–41 (FSETSKVQNVQNTQPKPAAPSQMSI) shows a compositional bias: polar residues. Basic and acidic residues-rich tracts occupy residues 56–109 (KSVE…KADN) and 120–144 (AKKE…EAKK). A compositionally biased stretch (basic residues) spans 145–156 (KESRRQKKMRNK). Residues 157-173 (NSKEGSVEKMEKSEKAY) show a composition bias toward basic and acidic residues.

This is an uncharacterized protein from Caenorhabditis elegans.